We begin with the raw amino-acid sequence, 347 residues long: NADH-ubiquinone oxidoreductase chain 2 (347 aa).

A run of 11 helical transmembrane segments spans residues 2–22, 25–45, 56–76, 96–116, 122–142, 149–169, 178–197, 202–219, 241–261, 278–298, and 326–346; these read SPYVLTIMSFSLLLGTTMTLI, HWLTAWMGLEINTLAIIPLMT, AIKYFMIQATASMIILFSAIF, FMMTIALAMKLGLAPFHFWVP, IPLLSGMLLLTWQKIAPISIF, LNMSLLMILSITSTLLGGWGG, ILAYSSIAHMGWMAIIIMIY, ILNLILYLASTITMFMVL, MIIITLTLLSLGGLPPLTGFM, LAMMLALSTLLNLFFYMRIIY, and IPTLTIISSLLLPMTPVFITL.

Belongs to the complex I subunit 2 family.

Its subcellular location is the mitochondrion inner membrane. It carries out the reaction a ubiquinone + NADH + 5 H(+)(in) = a ubiquinol + NAD(+) + 4 H(+)(out). Its function is as follows. Core subunit of the mitochondrial membrane respiratory chain NADH dehydrogenase (Complex I) that is believed to belong to the minimal assembly required for catalysis. Complex I functions in the transfer of electrons from NADH to the respiratory chain. The immediate electron acceptor for the enzyme is believed to be ubiquinone. This is NADH-ubiquinone oxidoreductase chain 2 (MT-ND2) from Didelphis virginiana (North American opossum).